Reading from the N-terminus, the 493-residue chain is MKHKVKHIHFVGIGGSGMSGIAEVMLNLGYKISGSDIHDSVTTRRLKKLGATVYIGHARTHVESADAVVTSTAILPDNPEVLAARESKVPVVPRAIMLAELLRLRQGIAIAGTHGKTTTTSLITSVLAEAGMDPTFVIGGRLEAAGSHAKLGRGEFIVVEADESDASFLHLQPVLAVVTNIDADHMDTYEHDFGKLKQAFVDFVQHLPFYGMAVLCVDDAHVLEIMPAITKPVTTYGLSETAQVRAADIRHSEGQMHFTALIGVNGKTRKLKIVLNLPGLHNVQNALAAIAVCNEVGLPDVSIVRALADFKGVDRRFQRYGEIPLTDPETGRNGSFTLIDDYGHHPVEMAATIAAARGAFPGRRLVLAFQPHRYTRTRDLFEDFVKVLSTADVLLLTEVYSAGEAPIIAADSKSLARSLRVLGKVEPIFVERVDELEEAIHSIARDKDVVLVMGAGSVGGVAPTLSRDSQVEARLLVSPKENREPAVLLLQGS.

112–118 (GTHGKTT) lines the ATP pocket.

Belongs to the MurCDEF family.

The protein localises to the cytoplasm. The enzyme catalyses UDP-N-acetyl-alpha-D-muramate + L-alanine + ATP = UDP-N-acetyl-alpha-D-muramoyl-L-alanine + ADP + phosphate + H(+). It participates in cell wall biogenesis; peptidoglycan biosynthesis. Its function is as follows. Cell wall formation. The polypeptide is UDP-N-acetylmuramate--L-alanine ligase (Nitrosospira multiformis (strain ATCC 25196 / NCIMB 11849 / C 71)).